The primary structure comprises 244 residues: Cobalt transport protein CbiM (244 aa).

Positions 1 to 27 (MVEGMLKTNFRLLFLLIFLLIPTPVLA) are cleaved as a signal peptide. 6 helical membrane-spanning segments follow: residues 36–56 (PVKW…VGFI), 65–85 (GPGA…LSAL), 102–122 (LAAI…VLIF), 134–154 (TLGA…YGVY), 168–188 (IFLA…VQLA), and 196–216 (LFLS…PLAI).

The protein belongs to the CbiM family. As to quaternary structure, forms an energy-coupling factor (ECF) transporter complex composed of an ATP-binding protein (A component, CbiO), a transmembrane protein (T component, CbiQ) and 2 possible substrate-capture proteins (S components, CbiM and CbiN) of unknown stoichimetry.

Its subcellular location is the cell membrane. Its pathway is cofactor biosynthesis; adenosylcobalamin biosynthesis. Functionally, part of the energy-coupling factor (ECF) transporter complex CbiMNOQ involved in cobalt import. The polypeptide is Cobalt transport protein CbiM (Carboxydothermus hydrogenoformans (strain ATCC BAA-161 / DSM 6008 / Z-2901)).